The chain runs to 207 residues: Small ribosomal subunit protein uS3 (207 aa).

The 70-residue stretch at 17–86 folds into the KH type-2 domain; that stretch reads IDEYLEKELR…NPQIEVEEIK (70 aa).

This sequence belongs to the universal ribosomal protein uS3 family. Part of the 30S ribosomal subunit.

Its function is as follows. Binds the lower part of the 30S subunit head. The protein is Small ribosomal subunit protein uS3 of Thermococcus sibiricus (strain DSM 12597 / MM 739).